Reading from the N-terminus, the 137-residue chain is Transcription antitermination protein NusB (137 aa).

The protein belongs to the NusB family.

In terms of biological role, involved in transcription antitermination. Required for transcription of ribosomal RNA (rRNA) genes. Binds specifically to the boxA antiterminator sequence of the ribosomal RNA (rrn) operons. This is Transcription antitermination protein NusB from Aeromonas hydrophila subsp. hydrophila (strain ATCC 7966 / DSM 30187 / BCRC 13018 / CCUG 14551 / JCM 1027 / KCTC 2358 / NCIMB 9240 / NCTC 8049).